We begin with the raw amino-acid sequence, 217 residues long: NADPH-dependent 3-demethoxyubiquinone 3-hydroxylase, mitochondrial (217 aa).

A mitochondrion-targeting transit peptide spans 1 to 35; the sequence is MSCAGAAAAPRLWRLRPGARRSLSAYGRRTSVRFR. The tract at residues 11-29 is required for nuclear localization; it reads RLWRLRPGARRSLSAYGRR. A run of 2 repeats spans residues 48 to 129 and 130 to 217. Residues 48–217 are 2 X approximate tandem repeats; it reads AVDRIIRVDH…RVAIYLSERL (170 aa). Arg51 lines the NADH pocket. Fe cation is bound by residues Glu60, Glu90, His93, Glu142, Glu178, and His181. Residues Tyr212 and Arg216 each contribute to the NADH site.

The protein belongs to the COQ7 family. In terms of assembly, component of a multi-subunit COQ enzyme complex. Interacts with COQ8B and COQ6. Interacts with COQ9. The cofactor is Fe cation. In terms of tissue distribution, expressed dominantly in heart and skeletal muscle.

The protein localises to the mitochondrion inner membrane. It localises to the mitochondrion. It is found in the nucleus. The protein resides in the chromosome. It catalyses the reaction a 5-methoxy-2-methyl-3-(all-trans-polyprenyl)benzoquinone + NADH + O2 = a 3-demethylubiquinone + NAD(+) + H2O. The protein operates within cofactor biosynthesis; ubiquinone biosynthesis. Its function is as follows. Catalyzes the hydroxylation of the 5-methoxy-2-methyl-3-(all-trans-polyprenyl)benzoquinone at the C6 position and participates in the biosynthesis of ubiquinone. Catalyzes the reaction through a substrate-mediated reduction pathway, whereby NADH shuttles electrons to 5-methoxy-2-methyl-3-(all-trans-decaprenyl)benzoquinone, which then transfers the electrons to the two Fe(3+) centers. The binding of 5-methoxy-2-methyl-3-(all-trans-polyprenyl)benzoquinone (DMQn) mediates reduction of the diiron center by nicotinamide adenine dinucleotide (NADH) and initiates oxygen activation for subsequent DMQ hydroxylation. The physiological substrates are 5-methoxy-2-methyl-3-(all-trans-nonaprenyl)benzoquinone (DMQ(9)) and 5-methoxy-2-methyl-3-(all-trans-decaprenyl)benzoquinone (DMQ(10)), however in vitro the enzyme does not have any specificity concerning the length of the polyprenyl tail, and accepts tails of various lengths with similar efficiency. Also has a structural role in the COQ enzyme complex, stabilizing other COQ polypeptides. Involved in lifespan determination in a ubiquinone-independent manner. Plays a role in modulating mitochondrial stress responses, acting in the nucleus, perhaps via regulating gene expression, independent of its characterized mitochondrial function in ubiquinone biosynthesis. In Homo sapiens (Human), this protein is NADPH-dependent 3-demethoxyubiquinone 3-hydroxylase, mitochondrial.